Consider the following 61-residue polypeptide: Photosystem II reaction center protein K (61 aa).

Residues 1-24 constitute a propeptide that is removed on maturation; that stretch reads MLNIFSLICICLNSALYSSNFFFA. The chain crosses the membrane as a helical span at residues 40 to 60; it reads MPVIPLFFFLLAFVWQAAVSF.

It belongs to the PsbK family. As to quaternary structure, PSII is composed of 1 copy each of membrane proteins PsbA, PsbB, PsbC, PsbD, PsbE, PsbF, PsbH, PsbI, PsbJ, PsbK, PsbL, PsbM, PsbT, PsbX, PsbY, PsbZ, Psb30/Ycf12, at least 3 peripheral proteins of the oxygen-evolving complex and a large number of cofactors. It forms dimeric complexes.

It localises to the plastid. It is found in the chloroplast thylakoid membrane. In terms of biological role, one of the components of the core complex of photosystem II (PSII). PSII is a light-driven water:plastoquinone oxidoreductase that uses light energy to abstract electrons from H(2)O, generating O(2) and a proton gradient subsequently used for ATP formation. It consists of a core antenna complex that captures photons, and an electron transfer chain that converts photonic excitation into a charge separation. In Vitis vinifera (Grape), this protein is Photosystem II reaction center protein K.